Consider the following 328-residue polypeptide: Glyoxylate reductase/hydroxypyruvate reductase (328 aa).

The residue at position 36 (Ser36) is a Phosphoserine. Residue 83 to 84 participates in substrate binding; the sequence is VG. Residues 162–164, 185–188, Ser217, and Ile243 contribute to the NADP(+) site; these read GRI and RQPR. Residues Arg245 and Asp269 each contribute to the substrate site. Ser272 is modified (phosphoserine). The active-site Proton donor is His293. 293-296 lines the substrate pocket; that stretch reads HIGS. An NADP(+)-binding site is contributed by Gly295. Thr298 carries the phosphothreonine modification.

This sequence belongs to the D-isomer specific 2-hydroxyacid dehydrogenase family. In terms of assembly, homodimer. Ubiquitous. Most abundantly expressed in the liver.

The catalysed reaction is glycolate + NADP(+) = glyoxylate + NADPH + H(+). The enzyme catalyses (R)-glycerate + NAD(+) = 3-hydroxypyruvate + NADH + H(+). It catalyses the reaction (R)-glycerate + NADP(+) = 3-hydroxypyruvate + NADPH + H(+). Enzyme with hydroxy-pyruvate reductase, glyoxylate reductase and D-glycerate dehydrogenase enzymatic activities. Reduces hydroxypyruvate to D-glycerate, glyoxylate to glycolate, oxidizes D-glycerate to hydroxypyruvate. This is Glyoxylate reductase/hydroxypyruvate reductase (GRHPR) from Homo sapiens (Human).